A 245-amino-acid chain; its full sequence is Type II restriction enzyme MjaIV (245 aa).

It carries out the reaction Endonucleolytic cleavage of DNA to give specific double-stranded fragments with terminal 5'-phosphates.. Its function is as follows. A P subtype restriction enzyme that recognizes the double-stranded sequence 5'-GTNNAC-3'; the cleavage site is unknown. This is Type II restriction enzyme MjaIV (mjaIVR) from Methanocaldococcus jannaschii (strain ATCC 43067 / DSM 2661 / JAL-1 / JCM 10045 / NBRC 100440) (Methanococcus jannaschii).